Here is a 945-residue protein sequence, read N- to C-terminus: Netrin receptor UNC5B (945 aa).

An N-terminal signal peptide occupies residues 1-26; it reads MRARSGARGALLLALLLCWDPTPSLA. At 27–377 the chain is on the extracellular side; that stretch reads GIDSGGQALP…LEPSGDVALY (351 aa). Residues 48-145 enclose the Ig-like domain; the sequence is PHFLLEPEDA…SGTTKSRRAY (98 aa). 9 disulfide bridges follow: cysteine 69–cysteine 130, cysteine 81–cysteine 128, cysteine 174–cysteine 225, cysteine 258–cysteine 295, cysteine 262–cysteine 299, cysteine 273–cysteine 285, cysteine 314–cysteine 348, cysteine 318–cysteine 353, and cysteine 326–cysteine 338. The 90-residue stretch at 153–242 folds into the Ig-like C2-type domain; sequence KNFDQEPLAK…KRRSTTATVI (90 aa). Asparagine 222 carries N-linked (GlcNAc...) asparagine glycosylation. 2 consecutive TSP type-1 domains span residues 246 to 300 and 302 to 354; these read NGGW…TVCP and DGAW…GLCV. The N-linked (GlcNAc...) asparagine glycan is linked to asparagine 347. Residues 378–398 form a helical membrane-spanning segment; that stretch reads AGLVVAVFVVLAVLMAVGVIV. Over 399–945 the chain is Cytoplasmic; that stretch reads YRRNCRDFDT…LVAMTTDGDC (547 aa). The S-palmitoyl cysteine moiety is linked to residue cysteine 403. The ZU5 domain occupies 543–686; the sequence is SSVSGTFGCL…LGTYVFTGES (144 aa). The residue at position 581 (tyrosine 581) is a Phosphotyrosine. Residues 689 to 838 are UPA domain; it reads RSAVKRLQLA…AETPAGSLDA (150 aa). The segment at 707–725 is interaction with DCC; that stretch reads SLEYSLRVYCLEDTPAALK. The 79-residue stretch at 865–943 folds into the Death domain; the sequence is KICNSLDAPN…EMLVAMTTDG (79 aa).

Belongs to the unc-5 family. As to quaternary structure, interacts with the cytoplasmic part of DCC. Interacts with GNAI2 via its cytoplasmic part. Interacts (via death domain) with DAPK1 (via death domain). Interacts (via extracellular domain) with FLRT3 (via extracellular domain); the interaction is direct. Interacts (via extracellular domain) with FLRT2 and FLRT3 (via extracellular domain), but has higher affinity for FLRT3. Identified in a complex with FLRT3 and ADGRL3; does not interact with ADGRL3 by itself. Post-translationally, phosphorylated on cytoplasmic tyrosine residues. In terms of processing, proteolytically cleaved by caspases during apoptosis. The cleavage does not take place when the receptor is associated with netrin ligand. Its cleavage by caspases is required to induce apoptosis. Palmitoylation is required for pro-apoptotic activity, but not for location at lipid rafts. As to expression, mainly expressed in regions of differentiating neurons. Expressed in the developing sensory ganglia that flank the spinal cord from E12, peaking at E14. Expressed in the roof plate region of the spinal cord from E14.

It localises to the cell membrane. Its subcellular location is the membrane raft. Functionally, receptor for netrin required for axon guidance. Mediates axon repulsion of neuronal growth cones in the developing nervous system upon ligand binding. Axon repulsion in growth cones may be caused by its association with DCC that may trigger signaling for repulsion. Functions as a netrin receptor that negatively regulates vascular branching during angiogenesis. Mediates retraction of tip cell filopodia on endothelial growth cones in response to netrin. It also acts as a dependence receptor required for apoptosis induction when not associated with netrin ligand. Mediates apoptosis by activating DAPK1. In the absence of NTN1, activates DAPK1 by reducing its autoinhibitory phosphorylation at Ser-308 thereby increasing its catalytic activity. This is Netrin receptor UNC5B (Unc5b) from Rattus norvegicus (Rat).